The following is a 240-amino-acid chain: Venom hemolysin-like protein 1 (240 aa).

The first 18 residues, 1–18, serve as a signal peptide directing secretion; the sequence is MQYKLILLVVGLFQASLA. The disordered stretch occupies residues 25–50; that stretch reads ESVPHPSKDVAPPDTQDSSTQTEVTT. Residues 39 to 50 are compositionally biased toward polar residues; the sequence is TQDSSTQTEVTT.

Expressed by the venom gland (anterior main gland) (at protein level).

The protein localises to the secreted. The polypeptide is Venom hemolysin-like protein 1 (Platymeris rhadamanthus (Red spot assassin bug)).